The following is a 540-amino-acid chain: Zinc metalloproteinase nas-10 (540 aa).

The Peptidase M12A domain occupies 293-500 (ASIFFEQNLI…VEILNKMYCK (208 aa)). 5 cysteine pairs are disulfide-bonded: Cys339–Cys499, Cys365–Cys385, Cys504–Cys540, Cys511–Cys533, and Cys520–Cys537. His394 provides a ligand contact to Zn(2+). Residue Glu395 is part of the active site. Residues His398 and His404 each contribute to the Zn(2+) site. The region spanning 504–540 (CDDKNVYCGAWALQDLCNNPNHNVWMRSNCRKSCNFC) is the ShKT domain.

Zn(2+) is required as a cofactor.

Metalloprotease. The polypeptide is Zinc metalloproteinase nas-10 (Caenorhabditis elegans).